The sequence spans 156 residues: Cyclic pyranopterin monophosphate synthase (156 aa).

Residues 73-75 (LCH) and 110-111 (ME) each bind substrate. Aspartate 125 is a catalytic residue.

It belongs to the MoaC family. In terms of assembly, homohexamer; trimer of dimers.

It catalyses the reaction (8S)-3',8-cyclo-7,8-dihydroguanosine 5'-triphosphate = cyclic pyranopterin phosphate + diphosphate. The protein operates within cofactor biosynthesis; molybdopterin biosynthesis. In terms of biological role, catalyzes the conversion of (8S)-3',8-cyclo-7,8-dihydroguanosine 5'-triphosphate to cyclic pyranopterin monophosphate (cPMP). The chain is Cyclic pyranopterin monophosphate synthase from Pseudomonas entomophila (strain L48).